A 179-amino-acid chain; its full sequence is Large ribosomal subunit protein uL5 (179 aa).

It belongs to the universal ribosomal protein uL5 family. As to quaternary structure, part of the 50S ribosomal subunit; part of the 5S rRNA/L5/L18/L25 subcomplex. Contacts the 5S rRNA and the P site tRNA. Forms a bridge to the 30S subunit in the 70S ribosome.

Its function is as follows. This is one of the proteins that bind and probably mediate the attachment of the 5S RNA into the large ribosomal subunit, where it forms part of the central protuberance. In the 70S ribosome it contacts protein S13 of the 30S subunit (bridge B1b), connecting the 2 subunits; this bridge is implicated in subunit movement. Contacts the P site tRNA; the 5S rRNA and some of its associated proteins might help stabilize positioning of ribosome-bound tRNAs. The polypeptide is Large ribosomal subunit protein uL5 (Synechococcus elongatus (strain ATCC 33912 / PCC 7942 / FACHB-805) (Anacystis nidulans R2)).